The chain runs to 358 residues: UDP-N-acetylglucosamine--N-acetylmuramyl-(pentapeptide) pyrophosphoryl-undecaprenol N-acetylglucosamine transferase (358 aa).

Residues threonine 11–glycine 13, asparagine 120, arginine 161, serine 188, and glutamine 282 contribute to the UDP-N-acetyl-alpha-D-glucosamine site.

This sequence belongs to the glycosyltransferase 28 family. MurG subfamily.

Its subcellular location is the cell inner membrane. The enzyme catalyses di-trans,octa-cis-undecaprenyl diphospho-N-acetyl-alpha-D-muramoyl-L-alanyl-D-glutamyl-meso-2,6-diaminopimeloyl-D-alanyl-D-alanine + UDP-N-acetyl-alpha-D-glucosamine = di-trans,octa-cis-undecaprenyl diphospho-[N-acetyl-alpha-D-glucosaminyl-(1-&gt;4)]-N-acetyl-alpha-D-muramoyl-L-alanyl-D-glutamyl-meso-2,6-diaminopimeloyl-D-alanyl-D-alanine + UDP + H(+). The protein operates within cell wall biogenesis; peptidoglycan biosynthesis. In terms of biological role, cell wall formation. Catalyzes the transfer of a GlcNAc subunit on undecaprenyl-pyrophosphoryl-MurNAc-pentapeptide (lipid intermediate I) to form undecaprenyl-pyrophosphoryl-MurNAc-(pentapeptide)GlcNAc (lipid intermediate II). The protein is UDP-N-acetylglucosamine--N-acetylmuramyl-(pentapeptide) pyrophosphoryl-undecaprenol N-acetylglucosamine transferase of Synechococcus sp. (strain CC9311).